The following is a 384-amino-acid chain: S-adenosylmethionine synthase (384 aa).

Position 15 (His15) interacts with ATP. Asp17 contributes to the Mg(2+) binding site. Glu43 contacts K(+). Residues Glu56 and Gln99 each coordinate L-methionine. The tract at residues 99 to 109 is flexible loop; it reads QSPDINQGVDR. Residues 164 to 166, 231 to 232, Asp240, 246 to 247, Ala263, and Lys267 contribute to the ATP site; these read DAK, RF, and RK. Asp240 contacts L-methionine. Lys271 provides a ligand contact to L-methionine.

This sequence belongs to the AdoMet synthase family. In terms of assembly, homotetramer; dimer of dimers. Requires Mg(2+) as cofactor. K(+) is required as a cofactor.

It is found in the cytoplasm. The catalysed reaction is L-methionine + ATP + H2O = S-adenosyl-L-methionine + phosphate + diphosphate. Its pathway is amino-acid biosynthesis; S-adenosyl-L-methionine biosynthesis; S-adenosyl-L-methionine from L-methionine: step 1/1. Functionally, catalyzes the formation of S-adenosylmethionine (AdoMet) from methionine and ATP. The overall synthetic reaction is composed of two sequential steps, AdoMet formation and the subsequent tripolyphosphate hydrolysis which occurs prior to release of AdoMet from the enzyme. The sequence is that of S-adenosylmethionine synthase from Shewanella halifaxensis (strain HAW-EB4).